The chain runs to 347 residues: Ribosomal RNA small subunit methyltransferase C (347 aa).

It belongs to the methyltransferase superfamily. RsmC family. As to quaternary structure, monomer.

The protein localises to the cytoplasm. It carries out the reaction guanosine(1207) in 16S rRNA + S-adenosyl-L-methionine = N(2)-methylguanosine(1207) in 16S rRNA + S-adenosyl-L-homocysteine + H(+). Its function is as follows. Specifically methylates the guanine in position 1207 of 16S rRNA in the 30S particle. This Shewanella baltica (strain OS185) protein is Ribosomal RNA small subunit methyltransferase C.